We begin with the raw amino-acid sequence, 2076 residues long: Protein Ycf2 (2076 aa).

Gly1458–Ser1465 serves as a coordination point for ATP.

It belongs to the Ycf2 family.

It is found in the plastid. The protein localises to the chloroplast stroma. Probable ATPase of unknown function. Its presence in a non-photosynthetic plant (Epifagus virginiana) and experiments in tobacco indicate that it has an essential function which is probably not related to photosynthesis. The chain is Protein Ycf2 from Acorus calamus (Sweet flag).